We begin with the raw amino-acid sequence, 203 residues long: LexA repressor (203 aa).

The segment at residues 30-50 (VREICQAVSLKSTSTVHGHLK) is a DNA-binding region (H-T-H motif). Catalysis depends on for autocatalytic cleavage activity residues S127 and K164.

This sequence belongs to the peptidase S24 family. Homodimer.

It carries out the reaction Hydrolysis of Ala-|-Gly bond in repressor LexA.. Functionally, represses a number of genes involved in the response to DNA damage (SOS response), including recA and lexA. In the presence of single-stranded DNA, RecA interacts with LexA causing an autocatalytic cleavage which disrupts the DNA-binding part of LexA, leading to derepression of the SOS regulon and eventually DNA repair. This Clostridium perfringens (strain 13 / Type A) protein is LexA repressor.